A 61-amino-acid polypeptide reads, in one-letter code: Large ribosomal subunit protein bL32 (61 aa).

Positions 1–19 are enriched in basic residues; sequence MAHPKRRQSKTRTAKRRTH. The tract at residues 1–20 is disordered; it reads MAHPKRRQSKTRTAKRRTHD.

It belongs to the bacterial ribosomal protein bL32 family.

In Bacteroides fragilis (strain YCH46), this protein is Large ribosomal subunit protein bL32.